The sequence spans 78 residues: Vacuolar ATPase assembly integral membrane protein VMA21 (78 aa).

At 1-14 the chain is on the cytoplasmic side; the sequence is MPADIPKSVVQKLV. Residues 15–35 traverse the membrane as a helical segment; that stretch reads FFTAAMIICPVATFFICQYLF. The Lumenal portion of the chain corresponds to 36 to 38; it reads SNN. Residues 39–59 form a helical membrane-spanning segment; the sequence is AIISGGVSALVANIVLIGYVV. Residues 60–78 lie on the Cytoplasmic side of the membrane; it reads AAFMEDTTEQEPEETKKSR. The Prevents secretion from ER signature appears at 75–78; sequence KKSR.

Belongs to the VMA21 family.

It localises to the endoplasmic reticulum membrane. It is found in the endoplasmic reticulum-Golgi intermediate compartment membrane. The protein localises to the cytoplasmic vesicle. The protein resides in the COPII-coated vesicle membrane. Its function is as follows. Required for the assembly of the V0 complex of the vacuolar ATPase (V-ATPase) in the endoplasmic reticulum. In Debaryomyces hansenii (strain ATCC 36239 / CBS 767 / BCRC 21394 / JCM 1990 / NBRC 0083 / IGC 2968) (Yeast), this protein is Vacuolar ATPase assembly integral membrane protein VMA21.